The chain runs to 762 residues: LON peptidase N-terminal domain and RING finger protein 1 (762 aa).

The segment at 1 to 35 (MSSPAVARASPGGNREASGGPRSRNGPWEVGGGGE) is disordered. One copy of the TPR 1 repeat lies at 47-80 (WELLLRRGELLALGGHLKGALEAFAAALRRGAPA). The segment at 118–154 (CLSCRGFLSEPVTVPCGHSYCRRCLRRELRARCRLCR) adopts an RING-type 1 zinc-finger fold. TPR repeat units follow at residues 201-233 (ARAA…EPSD), 235-267 (TLKI…LPNW), and 268-301 (PEVY…DEDF). Serine 420 carries the post-translational modification Phosphoserine. The RING-type 2 zinc finger occupies 468–506 (CSLCMRLFFEPVTTPCGHSFCKNCLERCLDHAPYCPLCK). A Lon N-terminal domain is found at 547-757 (TAELSHLTKN…KIQHILTYFS (211 aa)).

The polypeptide is LON peptidase N-terminal domain and RING finger protein 1 (Lonrf1) (Mus musculus (Mouse)).